The sequence spans 640 residues: Cytochrome P450 monooxygenase cyp1 (640 aa).

Residue Asn71 is glycosylated (N-linked (GlcNAc...) asparagine). A helical transmembrane segment spans residues Leu120 to Trp139. An N-linked (GlcNAc...) asparagine glycan is attached at Asn350. A heme-binding site is contributed by Cys572.

It belongs to the cytochrome P450 family. It depends on heme as a cofactor.

It is found in the membrane. It participates in secondary metabolite biosynthesis. Cytochrome P450 monooxygenase; part of the gene cluster that mediates the biosynthesis of the glycolipid biosurfactant ustilagic acid (UA). UA is a secreted cellobiose glycolipid that is toxic for many microorganisms and confers biocontrol activity to U.maydis. UA consists of 15,16-dihydroxypalmitic or 2,15,16-trihydroxypalmitic acid, which is O-glycosidically linked to cellobiose at its terminal hydroxyl group. In addition, the cellobiose moiety is acetylated and acylated with a short-chain hydroxy fatty acid. UA biosynthesis starts with omega-hydroxylation of palmitic acid catalyzed by the cytochrome P450 monooxygenase cyp1. Terminal hydroxylation of palmitic acid precedes subterminal hydroxylation catalyzed by the cytochrome P450 monooxygenase cyp2. Sequential glucosylation of the hydroxy fatty acid is probably catalyzed by the glycosyltransferase ugt1. The cellobiose lipid is further decorated by acetylation of the proximal glucose residue and by acylation with a short-chain beta-hydroxy fatty acid at the distal glucose residue. The acyltransferase uat1 may be a good candidate for catalyzing either acetylation or acylation of the cellobiose lipid. The fatty acid synthase fas2 may be involved in synthesis of the carbon backbone of the short-chain beta-hydroxy fatty acid esterified to the cellobiose disaccharide. The secreted UA consists of a mixture of both alpha-hydroxylated and non-hydroxylated glycolipids; therefore, alpha-hydroxylation of the long-chain fatty, catalyzed by the fatty acid hydroxylase ahd1, occurs late in UA biosynthesis and may be the last step before secretion. In Mycosarcoma maydis (Corn smut fungus), this protein is Cytochrome P450 monooxygenase cyp1.